The chain runs to 306 residues: Bifunctional protein FolD (306 aa).

NADP(+)-binding positions include 166-168 (GRS) and I232.

Belongs to the tetrahydrofolate dehydrogenase/cyclohydrolase family. As to quaternary structure, homodimer.

The enzyme catalyses (6R)-5,10-methylene-5,6,7,8-tetrahydrofolate + NADP(+) = (6R)-5,10-methenyltetrahydrofolate + NADPH. The catalysed reaction is (6R)-5,10-methenyltetrahydrofolate + H2O = (6R)-10-formyltetrahydrofolate + H(+). It functions in the pathway one-carbon metabolism; tetrahydrofolate interconversion. Its function is as follows. Catalyzes the oxidation of 5,10-methylenetetrahydrofolate to 5,10-methenyltetrahydrofolate and then the hydrolysis of 5,10-methenyltetrahydrofolate to 10-formyltetrahydrofolate. The chain is Bifunctional protein FolD from Methylorubrum extorquens (strain CM4 / NCIMB 13688) (Methylobacterium extorquens).